A 238-amino-acid chain; its full sequence is 1-(5-phosphoribosyl)-5-[(5-phosphoribosylamino)methylideneamino] imidazole-4-carboxamide isomerase (238 aa).

The active-site Proton acceptor is Asp8. The active-site Proton donor is the Asp129.

Belongs to the HisA/HisF family.

Its subcellular location is the cytoplasm. It carries out the reaction 1-(5-phospho-beta-D-ribosyl)-5-[(5-phospho-beta-D-ribosylamino)methylideneamino]imidazole-4-carboxamide = 5-[(5-phospho-1-deoxy-D-ribulos-1-ylimino)methylamino]-1-(5-phospho-beta-D-ribosyl)imidazole-4-carboxamide. It participates in amino-acid biosynthesis; L-histidine biosynthesis; L-histidine from 5-phospho-alpha-D-ribose 1-diphosphate: step 4/9. The polypeptide is 1-(5-phosphoribosyl)-5-[(5-phosphoribosylamino)methylideneamino] imidazole-4-carboxamide isomerase (Anaeromyxobacter dehalogenans (strain 2CP-1 / ATCC BAA-258)).